A 903-amino-acid chain; its full sequence is Dynamin-like GTPase msp1, mitochondrial (903 aa).

Residues 1–78 constitute a mitochondrion transit peptide; the sequence is MGISWFLSRF…RFFSFSSISR (78 aa). The chain crosses the membrane as a helical span at residues 86 to 103; it reads LPVAGFSLVAGGAAYIGA. Positions 167–188 are enriched in basic and acidic residues; that stretch reads VLQAERAKEHRSNSNDKQKSSD. Residues 167 to 198 form a disordered region; sequence VLQAERAKEHRSNSNDKQKSSDNDEDPNDTTV. Residues 198–214 traverse the membrane as a helical segment; that stretch reads VGIGAALAASILSVDSV. Residues 260–531 form the Dynamin-type G domain; sequence AVTLPSIVVI…LEYTMSKNLQ (272 aa). Residues 270–277 form a G1 motif region; the sequence is GSQSSGKS. The GTP site is built by S273, S274, G275, K276, S277, S278, and G292. Position 277 (S277) interacts with Mg(2+). Residues 296–298 are G2 motif; sequence VTR. Residues T297 and D370 each coordinate Mg(2+). Residues 370 to 373 are G3 motif; the sequence is DLPG. Residues 438–441 are G4 motif; that stretch reads TKMD. Residues K439, D441, and S468 each contribute to the GTP site. The segment at 467 to 470 is G5 motif; that stretch reads ISRI. Positions 691-805 are paddle region; the sequence is ATSEQVENCV…VLKSRACKHK (115 aa). The cysteines at positions 802 and 811 are disulfide-linked. One can recognise a GED domain in the interval 805-898; the sequence is KEAKYTCPEI…KINSLVILEQ (94 aa).

It belongs to the TRAFAC class dynamin-like GTPase superfamily. Dynamin/Fzo/YdjA family. As to quaternary structure, homooligomer. Interacts with cdr1. Post-translationally, cleavage of the transit peptide by mitochondrial processing protease (MPP) produces a long integral membrane form of msp1 (l-msp1). Further processing by a rhomboid protease after the transmembrane regions produces a short peripheral membrane form of msp1 (s-msp1). Both isoforms are required for full activity.

It is found in the mitochondrion inner membrane. The protein localises to the mitochondrion intermembrane space. The catalysed reaction is GTP + H2O = GDP + phosphate + H(+). In terms of biological role, dynamin-related GTPase that is essential for normal mitochondrial morphology by mediating fusion of the mitochondrial inner membranes and maintaining respiratory chain function. Exists in two forms: the transmembrane, long form (Dynamin-like GTPase msp1, long form; l-msp1), which is tethered to the inner mitochondrial membrane, and the short soluble form (Dynamin-like GTPase msp1, short form; s-msp1), which results from proteolytic cleavage and localizes in the intermembrane space. Both forms (l-msp1 and s-msp1) cooperate to catalyze the fusion of the mitochondrial inner membrane. Its role in mitochondrial morphology is required for mitochondrial genome maintenance. Constitutes the transmembrane long form (l-msp1) that plays a central role in mitochondrial inner membrane fusion. L-msp1 and the soluble short form (s-msp1) form higher-order helical assemblies that coordinate the fusion of mitochondrial inner membranes. Inner membrane-anchored l-msp1 molecules initiate membrane remodeling by recruiting soluble s-msp1 to rapidly polymerize into a flexible cylindrical scaffold encaging the mitochondrial inner membrane. Once at the membrane surface, the formation of s-msp1 helices induce bilayer curvature. Msp1 dimerization through the paddle region, which inserts into cardiolipin-containing membrane, promotes GTP hydrolysis and the helical assembly of a flexible msp1 lattice on the membrane, which drives membrane curvature and mitochondrial fusion. Functionally, constitutes the soluble short form (s-msp1) generated by cleavage, which plays a central role in mitochondrial inner membrane fusion. The transmembrane long form (l-msp1) and the s-msp1 form higher-order helical assemblies that coordinate the fusion of mitochondrial inner membranes. Inner membrane-anchored l-msp1 molecules initiate membrane remodeling by recruiting soluble s-msp1 to rapidly polymerize into a flexible cylindrical scaffold encaging the mitochondrial inner membrane. Once at the membrane surface, the formation of s-msp1 helices induce bilayer curvature. Msp1 dimerization through the paddle region, which inserts into cardiolipin-containing membrane, promotes GTP hydrolysis and the helical assembly of a flexible msp1 lattice on the membrane, which drives membrane curvature and mitochondrial fusion. This is Dynamin-like GTPase msp1, mitochondrial from Schizosaccharomyces pombe (strain 972 / ATCC 24843) (Fission yeast).